A 1020-amino-acid polypeptide reads, in one-letter code: Vacuolar membrane protease (1020 aa).

Residues 1-11 lie on the Cytoplasmic side of the membrane; it reads MKCHNPFGFRV. The chain crosses the membrane as a helical span at residues 12–32; sequence GPVTFWTIIIYLALLVPLLWI. Topologically, residues 33–410 are vacuolar; sequence HETVPPAPSS…GFAVFGLRGL (378 aa). 3 N-linked (GlcNAc...) asparagine glycosylation sites follow: Asn50, Asn94, and Asn130. 2 residues coordinate Zn(2+): His191 and Asp203. Glu237 functions as the Proton acceptor in the catalytic mechanism. The Zn(2+) site is built by Glu238, Glu263, and His336. Residues 411–431 traverse the membrane as a helical segment; that stretch reads FAWSLTLLIVSPLILAILVFI. The Cytoplasmic portion of the chain corresponds to 432 to 467; the sequence is LNRHDKLYFFSRKINVHNEGSEDPVSIGGFRGFTRF. Residues 468–488 form a helical membrane-spanning segment; that stretch reads PIAVGFSGALTLASAFLLTKI. Topologically, residues 489–491 are vacuolar; it reads NPM. The helical transmembrane segment at 492 to 512 threads the bilayer; that stretch reads IVYSSEYAVWGMMLSLFYVSL. Residues 513-529 lie on the Cytoplasmic side of the membrane; the sequence is WMTLKGSSAVRPSALQR. A helical transmembrane segment spans residues 530-550; it reads GYIHIWLFIVSWGLLIVVAVT. The Vacuolar segment spans residues 551 to 561; it reads EDRLKIASGYP. The chain crosses the membrane as a helical span at residues 562–582; the sequence is VVFLHSALFLSTVISFLELFG. Residues 583 to 690 are Cytoplasmic-facing; it reads LTKKHDYARR…RLPGWTWILQ (108 aa). The disordered stretch occupies residues 609 to 648; sequence DDALIAPDTPNDEAEDSDGEDSEHEPTETTPLRAGGDSRV. Positions 618 to 631 are enriched in acidic residues; it reads PNDEAEDSDGEDSE. A helical membrane pass occupies residues 691–711; it reads FLLLAPINVILWGQIGLFAVA. The Vacuolar portion of the chain corresponds to 712 to 724; it reads ATQAGGADGGSVL. The chain crosses the membrane as a helical span at residues 725–745; sequence TTYLIIAVLSIVILVPLAPFI. Residues 746–750 lie on the Cytoplasmic side of the membrane; the sequence is HRVHY. Residues 751–771 traverse the membrane as a helical segment; that stretch reads YVPIILFAAFAGTLIYNLIAF. The Vacuolar segment spans residues 772–1020; the sequence is PFSANNRYKI…VGLVRPVKRF (249 aa). 3 N-linked (GlcNAc...) asparagine glycosylation sites follow: Asn851, Asn868, and Asn873.

The protein belongs to the peptidase M28 family. The cofactor is Zn(2+).

It is found in the vacuole membrane. In terms of biological role, may be involved in vacuolar sorting and osmoregulation. The sequence is that of Vacuolar membrane protease from Verticillium alfalfae (strain VaMs.102 / ATCC MYA-4576 / FGSC 10136) (Verticillium wilt of alfalfa).